We begin with the raw amino-acid sequence, 577 residues long: Optineurin (577 aa).

Disordered regions lie at residues Met-1–Leu-32 and Ser-101–Leu-143. Residues Glu-38 to Ser-170 adopt a coiled-coil conformation. The interval Met-58 to Thr-209 is interaction with Rab8. The LIR motif lies at Asp-176 to Ile-181. Residue Ser-177 is modified to Phosphoserine; by TBK1. The segment covering Gly-186 to His-197 has biased composition (basic and acidic residues). Disordered stretches follow at residues Gly-186–Thr-209 and Val-261–Ser-297. At Ser-198 the chain carries Phosphoserine. Residues Cys-239 to Asp-508 adopt a coiled-coil conformation. Basic and acidic residues-rich tracts occupy residues Val-261 to Ile-274 and Ser-281 to Pro-292. A Phosphoserine modification is found at Ser-342. The segment at Thr-411–Ile-577 is interaction with HD. The interaction with MYO6 stretch occupies residues Arg-412–Arg-520. The UBAN signature appears at Asp-474–Arg-479. Ser-526 bears the Phosphoserine mark. The segment at Gln-547–Ile-577 adopts a CCHC NOA-type zinc-finger fold. Zn(2+) is bound by residues Cys-555, Cys-558, His-571, and Cys-575.

As to quaternary structure, self-associates. Interacts with HD. Interacts with GTF3A. Interacts with MYO6. Interacts (via UBAN) with ubiquitinated TFRC. Interacts with GTP-bound Rab8 (RAB8A and/or RAB8B). Interacts with TBC1D17. Interacts with TBK1. Interacts with TRAF3. Binds to linear ubiquitin chains. Interacts with LC3 family members MAP1LC3A, MAP1LC3B, GABARAP, GABARAPL1 and GABARAPL2; OPTN phosphorylation increases the association (at least with MAP1LC3B). Interacts with RAB12; the interaction may be indirect. Interacts with TBK1; this interaction leads to the Golgi localization of TBK1 and its subsequent activation. Interacts with palmitoyltransferase ZDHHC17/HIP14; the interaction does not lead to palmitoylation of OPTN. Interacts with CYLD. Interacts with TOM1; the interaction is indirect and is mediated by MYO6, which acts as a bridge between TOM1 and OPTN. Interacts with USP12; the interaction is independent of USP12 deubiquitinase activity and may be involved in regulation of autophagic flux. In terms of assembly, (Microbial infection) Interacts with E3 14.7 kDa protein of group C human adenovirus. Interacts with Bluetongue virus protein NS3. Phosphorylated by TBK1, leading to restrict bacterial proliferation in case of infection. Phosphorylation is induced by phorbol esters and decreases its half-time. In terms of tissue distribution, present in aqueous humor of the eye (at protein level). Expressed in the trabecular meshwork (at protein level). Expressed in nonpigmented ciliary epithelium (at protein level). Expressed at high levels in skeletal muscle, also detected in heart, brain, pancreas, kidney, placenta and liver. Expressed in dermal fibroblasts (at protein level).

It is found in the cytoplasm. Its subcellular location is the perinuclear region. The protein localises to the golgi apparatus. It localises to the trans-Golgi network. The protein resides in the cytoplasmic vesicle. It is found in the autophagosome. Its subcellular location is the recycling endosome. Its function is as follows. Plays an important role in the maintenance of the Golgi complex, in membrane trafficking, in exocytosis, through its interaction with myosin VI and Rab8. Links myosin VI to the Golgi complex and plays an important role in Golgi ribbon formation. Plays a role in the activation of innate immune response during viral infection. Mechanistically, recruits TBK1 at the Golgi apparatus, promoting its trans-phosphorylation after RLR or TLR3 stimulation. In turn, activated TBK1 phosphorylates its downstream partner IRF3 to produce IFN-beta/IFNB1. Plays a neuroprotective role in the eye and optic nerve. May act by regulating membrane trafficking and cellular morphogenesis via a complex that contains Rab8 and huntingtin (HD). Mediates the interaction of Rab8 with the probable GTPase-activating protein TBC1D17 during Rab8-mediated endocytic trafficking, such as that of transferrin receptor (TFRC/TfR); regulates Rab8 recruitment to tubules emanating from the endocytic recycling compartment. Autophagy receptor that interacts directly with both the cargo to become degraded and an autophagy modifier of the MAP1 LC3 family; targets ubiquitin-coated bacteria (xenophagy), such as cytoplasmic Salmonella enterica, and appears to function in the same pathway as SQSTM1 and CALCOCO2/NDP52. (Microbial infection) May constitute a cellular target for various viruses, such as adenovirus E3 14.7 or Bluetongue virus, to inhibit innate immune response. During RNA virus infection, such as that of Sendai virus, negatively regulates the induction of IFNB1. The chain is Optineurin (OPTN) from Homo sapiens (Human).